A 509-amino-acid polypeptide reads, in one-letter code: Maturase K (509 aa).

It belongs to the intron maturase 2 family. MatK subfamily.

It is found in the plastid. The protein resides in the chloroplast. In terms of biological role, usually encoded in the trnK tRNA gene intron. Probably assists in splicing its own and other chloroplast group II introns. The sequence is that of Maturase K from Nicotiana sylvestris (Wood tobacco).